The following is a 248-amino-acid chain: Proteasome subunit alpha type-7 (248 aa).

Residue Ser130 is glycosylated (O-linked (GlcNAc) serine). At Tyr153 the chain carries Phosphotyrosine; by ABL1 and ABL2. Residue Lys227 is modified to N6-acetyllysine.

It belongs to the peptidase T1A family. The 26S proteasome consists of a 20S proteasome core and two 19S regulatory subunits. The 20S proteasome core is a barrel-shaped complex made of 28 subunits that are arranged in four stacked rings. The two outer rings are each formed by seven alpha subunits, and the two inner rings are formed by seven beta subunits. The proteolytic activity is exerted by three beta-subunits PSMB5, PSMB6 and PSMB7. PSMA7 interacts directly with the PSMG1-PSMG2 heterodimer which promotes 20S proteasome assembly. Interacts with HIF1A. Interacts with RAB7A. Interacts with PRKN. Interacts with ABL1 and ABL2. Interacts with EMAP2. Interacts with MAVS. Phosphorylation by ABL1 or ABL2 leads to an inhibition of proteasomal activity and cell cycle transition blocks. As to expression, detected in liver (at protein level).

The protein resides in the cytoplasm. It is found in the nucleus. Component of the 20S core proteasome complex involved in the proteolytic degradation of most intracellular proteins. This complex plays numerous essential roles within the cell by associating with different regulatory particles. Associated with two 19S regulatory particles, forms the 26S proteasome and thus participates in the ATP-dependent degradation of ubiquitinated proteins. The 26S proteasome plays a key role in the maintenance of protein homeostasis by removing misfolded or damaged proteins that could impair cellular functions, and by removing proteins whose functions are no longer required. Associated with the PA200 or PA28, the 20S proteasome mediates ubiquitin-independent protein degradation. This type of proteolysis is required in several pathways including spermatogenesis (20S-PA200 complex) or generation of a subset of MHC class I-presented antigenic peptides (20S-PA28 complex). In Mus musculus (Mouse), this protein is Proteasome subunit alpha type-7 (Psma7).